We begin with the raw amino-acid sequence, 187 residues long: Protein TfaD (187 aa).

It in the C-terminal section; belongs to the tfa family.

This Escherichia coli (strain K12) protein is Protein TfaD (tfaD).